The primary structure comprises 467 residues: Nodulation protein T (467 aa).

Residues 1–17 form the signal peptide; the sequence is MRFTRYTTPFFSLLLSG. Cys18 is lipidated: N-palmitoyl cysteine. A lipid anchor (S-diacylglycerol cysteine) is attached at Cys18.

It belongs to the outer membrane factor (OMF) (TC 1.B.17) family.

Its subcellular location is the cell membrane. This chain is Nodulation protein T (nodT), found in Rhizobium leguminosarum bv. trifolii.